The sequence spans 30 residues: Glutathione S-transferase (30 aa).

This sequence belongs to the GST superfamily. In terms of assembly, monomer and homodimer.

It localises to the cytoplasm. The enzyme catalyses RX + glutathione = an S-substituted glutathione + a halide anion + H(+). Conjugation of reduced glutathione to a wide number of exogenous and endogenous hydrophobic electrophiles. The chain is Glutathione S-transferase from Pseudomonas fluorescens.